A 491-amino-acid chain; its full sequence is Cytochrome P450 2H1 (491 aa).

A heme-binding site is contributed by Cys436.

The protein belongs to the cytochrome P450 family. The cofactor is heme. As to expression, expressed in liver.

It localises to the endoplasmic reticulum membrane. The protein localises to the microsome membrane. The enzyme catalyses an organic molecule + reduced [NADPH--hemoprotein reductase] + O2 = an alcohol + oxidized [NADPH--hemoprotein reductase] + H2O + H(+). Its function is as follows. Cytochromes P450 are a group of heme-thiolate monooxygenases. In liver microsomes, this enzyme is involved in an NADPH-dependent electron transport pathway. It oxidizes a variety of structurally unrelated compounds, including steroids, fatty acids, and xenobiotics. This chain is Cytochrome P450 2H1 (CYP2H1), found in Gallus gallus (Chicken).